We begin with the raw amino-acid sequence, 150 residues long: Ribosomal RNA large subunit methyltransferase H (150 aa).

S-adenosyl-L-methionine-binding positions include Ile71, Ala100, and Leu118–Phe123.

Belongs to the RNA methyltransferase RlmH family. Homodimer.

The protein resides in the cytoplasm. The enzyme catalyses pseudouridine(1915) in 23S rRNA + S-adenosyl-L-methionine = N(3)-methylpseudouridine(1915) in 23S rRNA + S-adenosyl-L-homocysteine + H(+). In terms of biological role, specifically methylates the pseudouridine at position 1915 (m3Psi1915) in 23S rRNA. The protein is Ribosomal RNA large subunit methyltransferase H of Helicobacter acinonychis (strain Sheeba).